Consider the following 378-residue polypeptide: Cobalt-precorrin-5B C(1)-methyltransferase (378 aa).

This sequence belongs to the CbiD family.

It carries out the reaction Co-precorrin-5B + S-adenosyl-L-methionine = Co-precorrin-6A + S-adenosyl-L-homocysteine. Its pathway is cofactor biosynthesis; adenosylcobalamin biosynthesis; cob(II)yrinate a,c-diamide from sirohydrochlorin (anaerobic route): step 6/10. Functionally, catalyzes the methylation of C-1 in cobalt-precorrin-5B to form cobalt-precorrin-6A. The sequence is that of Cobalt-precorrin-5B C(1)-methyltransferase from Photorhabdus laumondii subsp. laumondii (strain DSM 15139 / CIP 105565 / TT01) (Photorhabdus luminescens subsp. laumondii).